We begin with the raw amino-acid sequence, 145 residues long: 3-dehydroquinate dehydratase (145 aa).

Y24 (proton acceptor) is an active-site residue. Substrate-binding residues include N76, H82, and D89. H102 (proton donor) is an active-site residue. Residues 103-104 (VS) and R113 contribute to the substrate site.

Belongs to the type-II 3-dehydroquinase family. In terms of assembly, homododecamer.

It carries out the reaction 3-dehydroquinate = 3-dehydroshikimate + H2O. The protein operates within metabolic intermediate biosynthesis; chorismate biosynthesis; chorismate from D-erythrose 4-phosphate and phosphoenolpyruvate: step 3/7. Catalyzes a trans-dehydration via an enolate intermediate. This Janthinobacterium sp. (strain Marseille) (Minibacterium massiliensis) protein is 3-dehydroquinate dehydratase.